The chain runs to 99 residues: DNA-directed RNA polymerase subunit omega (99 aa).

The protein belongs to the RNA polymerase subunit omega family. As to quaternary structure, the RNAP catalytic core consists of 2 alpha, 1 beta, 1 beta' and 1 omega subunit. When a sigma factor is associated with the core the holoenzyme is formed, which can initiate transcription.

The catalysed reaction is RNA(n) + a ribonucleoside 5'-triphosphate = RNA(n+1) + diphosphate. Promotes RNA polymerase assembly. Latches the N- and C-terminal regions of the beta' subunit thereby facilitating its interaction with the beta and alpha subunits. In Xanthomonas oryzae pv. oryzae (strain MAFF 311018), this protein is DNA-directed RNA polymerase subunit omega.